Consider the following 363-residue polypeptide: Ribosome-binding ATPase YchF (363 aa).

The 254-residue stretch at 3 to 256 (FKCGIVGLPN…LDDDEKIEFL (254 aa)) folds into the OBG-type G domain. 12-17 (NVGKST) contributes to the ATP binding site. Positions 16 and 36 each coordinate Mg(2+). The 84-residue stretch at 278 to 361 (NLQTYFTAGV…QDGDVMHFRF (84 aa)) folds into the TGS domain.

This sequence belongs to the TRAFAC class OBG-HflX-like GTPase superfamily. OBG GTPase family. YchF/OLA1 subfamily. Mg(2+) is required as a cofactor.

Its function is as follows. ATPase that binds to both the 70S ribosome and the 50S ribosomal subunit in a nucleotide-independent manner. In Pasteurella multocida (strain Pm70), this protein is Ribosome-binding ATPase YchF.